Consider the following 542-residue polypeptide: CTP synthase (542 aa).

The segment at 1–265 (MTRYIFVTGG…DDFVVERFGL (265 aa)) is amidoligase domain. Residue serine 13 coordinates CTP. Serine 13 is a binding site for UTP. Residues 14–19 (SLGKGI) and aspartate 71 contribute to the ATP site. Mg(2+) contacts are provided by aspartate 71 and glutamate 139. CTP is bound by residues 146 to 148 (DIE), 186 to 191 (KTKPTQ), and lysine 222. Residues 186–191 (KTKPTQ) and lysine 222 contribute to the UTP site. The Glutamine amidotransferase type-1 domain occupies 290 to 541 (TIAMVGKYME…VKAALAQKNK (252 aa)). Position 351 (glycine 351) interacts with L-glutamine. The active-site Nucleophile; for glutamine hydrolysis is cysteine 378. Residues 379 to 382 (LGMQ), glutamate 402, and arginine 469 each bind L-glutamine. Catalysis depends on residues histidine 514 and glutamate 516.

Belongs to the CTP synthase family. In terms of assembly, homotetramer.

It catalyses the reaction UTP + L-glutamine + ATP + H2O = CTP + L-glutamate + ADP + phosphate + 2 H(+). It carries out the reaction L-glutamine + H2O = L-glutamate + NH4(+). The enzyme catalyses UTP + NH4(+) + ATP = CTP + ADP + phosphate + 2 H(+). Its pathway is pyrimidine metabolism; CTP biosynthesis via de novo pathway; CTP from UDP: step 2/2. Allosterically activated by GTP, when glutamine is the substrate; GTP has no effect on the reaction when ammonia is the substrate. The allosteric effector GTP functions by stabilizing the protein conformation that binds the tetrahedral intermediate(s) formed during glutamine hydrolysis. Inhibited by the product CTP, via allosteric rather than competitive inhibition. Catalyzes the ATP-dependent amination of UTP to CTP with either L-glutamine or ammonia as the source of nitrogen. Regulates intracellular CTP levels through interactions with the four ribonucleotide triphosphates. This is CTP synthase from Pseudomonas putida (strain GB-1).